The primary structure comprises 504 residues: ATP synthase subunit alpha, chloroplastic (504 aa).

Position 170-177 (170-177 (GDRQTGKT)) interacts with ATP.

Belongs to the ATPase alpha/beta chains family. As to quaternary structure, F-type ATPases have 2 components, CF(1) - the catalytic core - and CF(0) - the membrane proton channel. CF(1) has five subunits: alpha(3), beta(3), gamma(1), delta(1), epsilon(1). CF(0) has four main subunits: a, b, b' and c.

It is found in the plastid. It localises to the chloroplast thylakoid membrane. It catalyses the reaction ATP + H2O + 4 H(+)(in) = ADP + phosphate + 5 H(+)(out). Its function is as follows. Produces ATP from ADP in the presence of a proton gradient across the membrane. The alpha chain is a regulatory subunit. The protein is ATP synthase subunit alpha, chloroplastic of Pyropia yezoensis (Susabi-nori).